Reading from the N-terminus, the 21-residue chain is Bradykinin-potentiating peptide K12 (21 aa).

Residues 1–21 are disordered; that stretch reads LRDYANRVINGGPVEAAGPPA.

As to expression, expressed by the venom gland.

Its subcellular location is the secreted. In terms of biological role, inhibits angiotensin-converting enzyme (ACE), but does not serve as substrate for the enzyme. Potentiate bradykinin (BK) on the isolated guinea pig ileum as well as the isolated rat uterus for contraction. Also potentiates in vivo the depressor effect of BK on arterial blood pressure in the normotensive anesthetized rat. Intracerebroventricular injection into mice does not show toxic activity. The polypeptide is Bradykinin-potentiating peptide K12 (Buthus occitanus (Common European scorpion)).